Consider the following 518-residue polypeptide: Probable protein phosphatase 2C 14 (518 aa).

Composition is skewed to low complexity over residues 1–10 (MVEAAAGRRS) and 86–105 (PQRQQPRLAAQTPRGPAPGA). Disordered regions lie at residues 1–31 (MVEAAAGRRSGANRRRPSGGGERRRQQQQHQ) and 86–108 (PQRQQPRLAAQTPRGPAPGADGR). Residues 129–437 (VASLYTLQGK…DDCAVVCLFL (309 aa)) enclose the PPM-type phosphatase domain. Residues Asp-165 and Gly-166 each coordinate Mn(2+). The segment at 192-222 (TDEGRQTSTSSIKSNGDETGSPGNMGRDAEQ) is disordered. A compositionally biased stretch (polar residues) spans 197-213 (QTSTSSIKSNGDETGSP). Residues Asp-382 and Asp-428 each coordinate Mn(2+).

Belongs to the PP2C family. It depends on Mg(2+) as a cofactor. Mn(2+) serves as cofactor.

The catalysed reaction is O-phospho-L-seryl-[protein] + H2O = L-seryl-[protein] + phosphate. It carries out the reaction O-phospho-L-threonyl-[protein] + H2O = L-threonyl-[protein] + phosphate. This is Probable protein phosphatase 2C 14 from Oryza sativa subsp. japonica (Rice).